The primary structure comprises 230 residues: Osmotin-like protein PR-5x (230 aa).

A signal peptide spans methionine 1–alanine 25. Intrachain disulfides connect cysteine 34-cysteine 229, cysteine 76-cysteine 86, cysteine 91-cysteine 97, cysteine 145-cysteine 217, cysteine 150-cysteine 200, cysteine 158-cysteine 168, cysteine 172-cysteine 181, and cysteine 182-cysteine 187.

The protein belongs to the thaumatin family.

The protein localises to the secreted. It localises to the vacuole. The catalysed reaction is Endohydrolysis of (1-&gt;3)- or (1-&gt;4)-linkages in beta-D-glucans when the glucose residue whose reducing group is involved in the linkage to be hydrolyzed is itself substituted at C-3.. In terms of biological role, antifungal protein. May bind to beta-glucans and have beta-1,3-D-glucanase activity. This chain is Osmotin-like protein PR-5x, found in Solanum lycopersicum (Tomato).